The sequence spans 77 residues: Putative antitoxin MazE7 (77 aa).

Residues 49-77 (REASHAETTTQAVRDEDREWEGTVGDGLG) are disordered.

In terms of assembly, forms a complex with cognate toxin MazF7.

Its function is as follows. Antitoxin component of a type II toxin-antitoxin (TA) system. In Mycobacterium tuberculosis (strain CDC 1551 / Oshkosh), this protein is Putative antitoxin MazE7 (mazE7).